The primary structure comprises 151 residues: MTHPVIPDILALAQPIAEDLGLEVTDAVFQTNKRPPVLRIDIRNLQQDTSLNDCEAFSRSFEAQLEESSLIASAYVLEVSSPGISPYLATERDFIAFKGFEVVVTSDNPHQGQSQWQGSLQGRDGEAVYLSIRGRTVAIPLTVGLTVRLPH.

The protein belongs to the RimP family.

It is found in the cytoplasm. In terms of biological role, required for maturation of 30S ribosomal subunits. This Synechocystis sp. (strain ATCC 27184 / PCC 6803 / Kazusa) protein is Ribosome maturation factor RimP.